Here is a 165-residue protein sequence, read N- to C-terminus: Peptidyl-prolyl cis-trans isomerase A (165 aa).

Met-1 carries the N-acetylmethionine modification. An N-acetylvaline; in Peptidyl-prolyl cis-trans isomerase A, N-terminally processed modification is found at Val-2. Residues 7-163 (FFDIAVDGEP…KKITIADCGQ (157 aa)) form the PPIase cyclophilin-type domain. N6-acetyllysine; alternate is present on Lys-28. A Glycyl lysine isopeptide (Lys-Gly) (interchain with G-Cter in SUMO2); alternate cross-link involves residue Lys-28. Lys-28 participates in a covalent cross-link: Glycyl lysine isopeptide (Lys-Gly) (interchain with G-Cter in ubiquitin); alternate. N6-acetyllysine is present on residues Lys-44 and Lys-76. At Ser-77 the chain carries Phosphoserine. Lys-82 is modified (N6-acetyllysine; alternate). Lys-82 participates in a covalent cross-link: Glycyl lysine isopeptide (Lys-Gly) (interchain with G-Cter in SUMO2); alternate. Thr-93 carries the phosphothreonine modification. Asn-108 carries an N-linked (GlcNAc...) asparagine glycan. Lys-125, Lys-131, and Lys-133 each carry N6-acetyllysine.

The protein belongs to the cyclophilin-type PPIase family. PPIase A subfamily. In terms of assembly, interacts with protein phosphatase PPP3CA/calcineurin A. Interacts with isoform 2 of BSG/CD147. Interacts with FOXO1; the interaction promotes FOXO1 dephosphorylation, nuclear accumulation and transcriptional activity. Interacts with integrin ITGA2B:ITGB3; the interaction is ROS and peptidyl-prolyl cis-trans isomerase (PPIase) activity-dependent and is increased in the presence of thrombin. Interacts with MAP3K5. Interacts with TARDBP; the interaction is dependent on the RNA-binding activity of TARDBP and the PPIase activity of PPIA/CYPA and the acetylation of PPIA/CYPA at Lys-125 favors the interaction. Interacts with HNRNPA1, HNRNPA2B1, HNRNPC, RBMX, HNRNPK and HNRNPM. Acetylation at Lys-125 markedly inhibits catalysis of cis to trans isomerization. PPIA acetylation also antagonizes the immunosuppressive effects of cyclosporine by inhibiting the sequential steps of cyclosporine binding and calcineurin inhibition. Acetylation at Lys-125 favors the interaction with TARDBP.

Its subcellular location is the cytoplasm. It is found in the secreted. It localises to the nucleus. It catalyses the reaction [protein]-peptidylproline (omega=180) = [protein]-peptidylproline (omega=0). Binds cyclosporin A (CsA). CsA mediates some of its effects via an inhibitory action on PPIase. Catalyzes the cis-trans isomerization of proline imidic peptide bonds in oligopeptides. Exerts a strong chemotactic effect on leukocytes partly through activation of one of its membrane receptors BSG/CD147, initiating a signaling cascade that culminates in MAPK/ERK activation. Activates endothelial cells (ECs) in a proinflammatory manner by stimulating activation of NF-kappa-B and ERK, JNK and p38 MAP-kinases and by inducing expression of adhesion molecules including SELE and VCAM1. Induces apoptosis in ECs by promoting the FOXO1-dependent expression of CCL2 and BCL2L11 which are involved in EC chemotaxis and apoptosis. In response to oxidative stress, initiates proapoptotic and antiapoptotic signaling in ECs via activation of NF-kappa-B and AKT1 and up-regulation of antiapoptotic protein BCL2. Negatively regulates MAP3K5/ASK1 kinase activity, autophosphorylation and oxidative stress-induced apoptosis mediated by MAP3K5/ASK1. Necessary for the assembly of TARDBP in heterogeneous nuclear ribonucleoprotein (hnRNP) complexes and regulates TARDBP binding to RNA UG repeats and TARDBP-dependent expression of HDAC6, ATG7 and VCP which are involved in clearance of protein aggregates. Plays an important role in platelet activation and aggregation. Regulates calcium mobilization and integrin ITGA2B:ITGB3 bidirectional signaling via increased ROS production as well as by facilitating the interaction between integrin and the cell cytoskeleton. Binds heparan sulfate glycosaminoglycans. The polypeptide is Peptidyl-prolyl cis-trans isomerase A (PPIA) (Symphalangus syndactylus (Siamang)).